A 613-amino-acid chain; its full sequence is Epsin-2 (613 aa).

The ENTH domain occupies 11–143; the sequence is NMMKGYSSTQ…NDEERLREER (133 aa). 3 disordered regions span residues 140-208, 323-351, and 356-375; these read REER…DDED, TAAN…PFSM, and RQKQ…EARQ. Residues 148-167 show a composition bias toward basic residues; sequence RNRRANRAARPRPRRQRTRS. Thr-165 is modified (phosphothreonine). Ser-167 carries the phosphoserine modification. 2 UIM domains span residues 175–194 and 206–225; these read SYQD…AQED and DEDP…EELK. The segment covering 179 to 188 has biased composition (basic and acidic residues); the sequence is DLEKALEESR. The segment covering 323 to 339 has biased composition (low complexity); sequence TAANMQQQQQQPADFQQ. A compositionally biased stretch (polar residues) spans 340–350; that stretch reads PLPTGSNNPFS. Residue Lys-426 forms a Glycyl lysine isopeptide (Lys-Gly) (interchain with G-Cter in ubiquitin) linkage. Position 430 is a phosphothreonine (Thr-430). A Phosphoserine modification is found at Ser-434. A phosphothreonine mark is found at Thr-450, Thr-468, and Thr-470. The segment covering 471 to 512 has biased composition (polar residues); the sequence is GTFINSQGTGYKQVTNEPKNNPFLSNQYTGLPSTNIVPTQTG. The interval 471 to 613 is disordered; that stretch reads GTFINSQGTG…PDQGVSLIDL (143 aa). Residues 526-600 show a composition bias toward low complexity; sequence SPQQNPTGIS…QQQQQQQQQQ (75 aa).

It belongs to the epsin family. In terms of processing, phosphorylated by PRK1.

The protein localises to the cytoplasm. It is found in the membrane. In terms of biological role, binds to membranes enriched in phosphatidylinositol 3,5-bisphosphate (PtdIns(3,5)P2) and phosphatidylinositol 4,5-bisphosphate (PtdIns(4,5)P2). Required for endocytosis and localization of actin. The chain is Epsin-2 (ENT2) from Saccharomyces cerevisiae (strain ATCC 204508 / S288c) (Baker's yeast).